The chain runs to 1411 residues: Uveal autoantigen with coiled-coil domains and ankyrin repeats (1411 aa).

N-acetylmethionine is present on Met1. Positions 1–30 (MKSLKSRLWKQDAPGPTSPSSPTAVASTQS) are disordered. A compositionally biased stretch (low complexity) spans 13–30 (APGPTSPSSPTAVASTQS). ANK repeat units lie at residues 69 to 98 (EGRS…DVAT), 102 to 131 (AGRN…PTEH), 135 to 164 (QGRT…SVNA), 168 to 197 (DGRT…DVNS), 201 to 230 (QNRT…DLTL), and 234 to 263 (LGHD…NTNK). Residues 263 to 301 (KGRELWRKGPPLQQRNLSHTQDEGSVKSTQREQREPHSF) are disordered. Ser280 bears the Phosphoserine mark. Basic and acidic residues predominate over residues 282–301 (TQDEGSVKSTQREQREPHSF). Coiled coils occupy residues 299-379 (HSFQ…NRFK), 442-624 (SENE…LKEL), and 652-1380 (VKRL…AIYR). Residues 1006-1031 (GLKEQLSEQTHKCRQRDEEVKKGKQE) are disordered.

As to quaternary structure, component of the apoptosome complex, composed of APAF1, pro-caspase-9 and UACA. In the complex, it probably interacts directly with APAF1. Interacts with LGALS3, ARF6 and ACTB. Interacts with RAB39A. As to expression, highly expressed in heart, liver, kidney and testis. Weakly expressed in lung and skeletal muscle. Not expressed in brain and spleen.

It is found in the nucleus. The protein resides in the cytoplasm. It localises to the cytoskeleton. Regulates APAF1 expression and plays an important role in the regulation of stress-induced apoptosis. Promotes apoptosis by regulating three pathways, apoptosome up-regulation, LGALS3/galectin-3 down-regulation and NF-kappa-B inactivation. Regulates the redistribution of APAF1 into the nucleus after proapoptotic stress. Down-regulates the expression of LGALS3 by inhibiting NFKB1. Its function is as follows. Modulates isoactin dynamics to regulate the morphological alterations required for cell growth and motility. Interaction with ARF6 may modulate cell shape and motility after injury. May be involved in multiple neurite formation. This chain is Uveal autoantigen with coiled-coil domains and ankyrin repeats (Uaca), found in Mus musculus (Mouse).